A 281-amino-acid polypeptide reads, in one-letter code: Protein UL24 (281 aa).

The segment at 199–252 is disordered; the sequence is AVPPEPQTRRSRRRVAATARPQRPPSPTRDPEGTAGHPAPPESDPPSPGVVGVA. The span at 236–246 shows a compositional bias: pro residues; sequence PAPPESDPPSP.

The protein belongs to the herpesviridae UL24 family.

It localises to the virion. The protein resides in the host cytoplasm. Its subcellular location is the host nucleus. It is found in the host nucleolus. The protein localises to the host Golgi apparatus. May participate in nuclear egress of viral particles. Plays a role in the dispersal of several host nucleolar proteins including NCL/nucleolin and NPM1. Since deletion of host NCL/nucleolin negatively impact on nuclear egress, UL24 supposedly acts on this process through its effect on host nucleoli. The protein is Protein UL24 of Human herpesvirus 2 (strain HG52) (HHV-2).